A 185-amino-acid chain; its full sequence is Ribosome-recycling factor (185 aa).

It belongs to the RRF family.

The protein resides in the cytoplasm. Its function is as follows. Responsible for the release of ribosomes from messenger RNA at the termination of protein biosynthesis. May increase the efficiency of translation by recycling ribosomes from one round of translation to another. This Dehalococcoides mccartyi (strain ATCC BAA-2266 / KCTC 15142 / 195) (Dehalococcoides ethenogenes (strain 195)) protein is Ribosome-recycling factor.